We begin with the raw amino-acid sequence, 211 residues long: Uracil phosphoribosyltransferase (211 aa).

5-phospho-alpha-D-ribose 1-diphosphate-binding positions include Arg78, Arg103, and 130-138 (DPMLATGGT). Uracil-binding positions include Ile195 and 200 to 202 (GDA). Asp201 contacts 5-phospho-alpha-D-ribose 1-diphosphate.

It belongs to the UPRTase family. Mg(2+) serves as cofactor.

The enzyme catalyses UMP + diphosphate = 5-phospho-alpha-D-ribose 1-diphosphate + uracil. It functions in the pathway pyrimidine metabolism; UMP biosynthesis via salvage pathway; UMP from uracil: step 1/1. Allosterically activated by GTP. Its function is as follows. Catalyzes the conversion of uracil and 5-phospho-alpha-D-ribose 1-diphosphate (PRPP) to UMP and diphosphate. In Streptomyces coelicolor (strain ATCC BAA-471 / A3(2) / M145), this protein is Uracil phosphoribosyltransferase.